Reading from the N-terminus, the 116-residue chain is uncharacterized protein (116 aa).

The CHY-type zinc finger occupies 1–72 (MCKHVLNAQV…SDEYCPNCDN (72 aa)). Residues Cys2, His4, Cys16, Cys17, Cys23, Cys26, His27, His33, Cys45, Cys48, Cys67, and Cys70 each coordinate Zn(2+).

It localises to the cytoplasm. This is an uncharacterized protein from Schizosaccharomyces pombe (strain 972 / ATCC 24843) (Fission yeast).